A 318-amino-acid polypeptide reads, in one-letter code: Acetaldehyde dehydrogenase 1 (318 aa).

An NAD(+)-binding site is contributed by 15-18 (SGNI). Cys133 serves as the catalytic Acyl-thioester intermediate. NAD(+) is bound by residues 164–172 (SAGPGTRAN) and Asn289.

It belongs to the acetaldehyde dehydrogenase family.

It carries out the reaction acetaldehyde + NAD(+) + CoA = acetyl-CoA + NADH + H(+). This chain is Acetaldehyde dehydrogenase 1 (xylQ), found in Azotobacter vinelandii (strain DJ / ATCC BAA-1303).